A 425-amino-acid polypeptide reads, in one-letter code: Dihydroorotase (425 aa).

Residues His59 and His61 each coordinate Zn(2+). Substrate-binding positions include 61–63 (HLR) and Asn93. Residues Asp151, His178, and His231 each contribute to the Zn(2+) site. Residue Asn277 participates in substrate binding. Asp304 provides a ligand contact to Zn(2+). The active site involves Asp304. Substrate is bound by residues His308 and 322–323 (FG).

The protein belongs to the metallo-dependent hydrolases superfamily. DHOase family. Class I DHOase subfamily. Zn(2+) is required as a cofactor.

The catalysed reaction is (S)-dihydroorotate + H2O = N-carbamoyl-L-aspartate + H(+). It participates in pyrimidine metabolism; UMP biosynthesis via de novo pathway; (S)-dihydroorotate from bicarbonate: step 3/3. In terms of biological role, catalyzes the reversible cyclization of carbamoyl aspartate to dihydroorotate. In Staphylococcus epidermidis (strain ATCC 35984 / DSM 28319 / BCRC 17069 / CCUG 31568 / BM 3577 / RP62A), this protein is Dihydroorotase.